Consider the following 103-residue polypeptide: Cytochrome c-552 (103 aa).

A signal peptide spans Met-1 to Ala-22. Heme c-binding residues include Cys-32, Cys-35, His-36, and Met-81.

As to quaternary structure, monomer. In terms of processing, binds 1 heme c group covalently per subunit.

Its subcellular location is the periplasm. Its function is as follows. Monoheme c-type cytochrome. Probable electron donor to membrane cytochrome oxidase and to periplasmic nitrite reductase. This is Cytochrome c-552 (cyt) from Nitrosomonas europaea (strain ATCC 19718 / CIP 103999 / KCTC 2705 / NBRC 14298).